We begin with the raw amino-acid sequence, 359 residues long: Doublesex- and mab-3-related transcription factor B1 (359 aa).

The DM DNA-binding region spans 7 to 54; it reads CSRCRNHGYLVPVKGHTGKCRWKQCICDKCYLITERQKIMAAQKVLRT. 2 disordered regions span residues 111–149 and 262–359; these read PPQA…RDRS and SGLV…EQSN. Pro residues-rich tracts occupy residues 277 to 299 and 315 to 325; these read CSPP…PQPQ and LPPPPPPPSPP. Residues 348–359 show a composition bias toward polar residues; it reads EPSQDSPQEQSN.

The protein belongs to the DMRT family. In terms of tissue distribution, brain.

The protein resides in the nucleus. In Mus musculus (Mouse), this protein is Doublesex- and mab-3-related transcription factor B1 (Dmrtb1).